The sequence spans 645 residues: Fructose-1,6-bisphosphatase class 3 (645 aa).

Belongs to the FBPase class 3 family. The cofactor is Mn(2+).

It carries out the reaction beta-D-fructose 1,6-bisphosphate + H2O = beta-D-fructose 6-phosphate + phosphate. It functions in the pathway carbohydrate biosynthesis; gluconeogenesis. The protein is Fructose-1,6-bisphosphatase class 3 of Fusobacterium nucleatum subsp. nucleatum (strain ATCC 25586 / DSM 15643 / BCRC 10681 / CIP 101130 / JCM 8532 / KCTC 2640 / LMG 13131 / VPI 4355).